Consider the following 35-residue polypeptide: Surfactant protein C (35 aa).

Residues Cys5 and Cys6 are each lipidated (S-palmitoyl cysteine).

It localises to the secreted. The protein localises to the extracellular space. The protein resides in the surface film. Functionally, pulmonary surfactant associated proteins promote alveolar stability by lowering the surface tension at the air-liquid interface in the peripheral air spaces. The chain is Surfactant protein C (SFTPC) from Sus scrofa (Pig).